The chain runs to 186 residues: Elongation factor P (186 aa).

The protein belongs to the elongation factor P family.

The protein localises to the cytoplasm. It participates in protein biosynthesis; polypeptide chain elongation. Involved in peptide bond synthesis. Stimulates efficient translation and peptide-bond synthesis on native or reconstituted 70S ribosomes in vitro. Probably functions indirectly by altering the affinity of the ribosome for aminoacyl-tRNA, thus increasing their reactivity as acceptors for peptidyl transferase. The sequence is that of Elongation factor P from Shewanella sp. (strain W3-18-1).